Consider the following 195-residue polypeptide: Elongation factor Ts (195 aa).

The involved in Mg(2+) ion dislocation from EF-Tu stretch occupies residues 81-84 (TDFV).

The protein belongs to the EF-Ts family.

It is found in the cytoplasm. Associates with the EF-Tu.GDP complex and induces the exchange of GDP to GTP. It remains bound to the aminoacyl-tRNA.EF-Tu.GTP complex up to the GTP hydrolysis stage on the ribosome. The chain is Elongation factor Ts from Rubrobacter xylanophilus (strain DSM 9941 / JCM 11954 / NBRC 16129 / PRD-1).